The primary structure comprises 136 residues: Large ribosomal subunit protein bL21 (136 aa).

It belongs to the bacterial ribosomal protein bL21 family. In terms of assembly, part of the 50S ribosomal subunit. Contacts protein L20.

This protein binds to 23S rRNA in the presence of protein L20. This Gloeothece citriformis (strain PCC 7424) (Cyanothece sp. (strain PCC 7424)) protein is Large ribosomal subunit protein bL21.